The following is a 381-amino-acid chain: Phenylalanine dehydrogenase (381 aa).

Residue arginine 55 coordinates NAD(+). Lysine 79 lines the L-phenylalanine pocket. The active site involves lysine 91. Residues aspartate 126, serine 157, threonine 161, 191–197 (GLGKVGY), 214–215 (DI), 254–255 (AM), and 275–277 (SAN) contribute to the NAD(+) site. Asparagine 277 contacts L-phenylalanine.

Belongs to the Glu/Leu/Phe/Val dehydrogenases family.

The enzyme catalyses L-phenylalanine + NAD(+) + H2O = 3-phenylpyruvate + NH4(+) + NADH + H(+). The protein operates within amino-acid biosynthesis; L-phenylalanine biosynthesis; L-phenylalanine from phenylpyruvate (PDH route): step 1/1. In terms of biological role, catalyzes the reversible NAD(+)-dependent oxidative deamination of L-phenylalanine to phenylpyruvate. This is Phenylalanine dehydrogenase from Lysinibacillus sphaericus (Bacillus sphaericus).